The chain runs to 202 residues: uncharacterized protein (202 aa).

A helical transmembrane segment spans residues 175-195 (INTGIALFIILTSLLVYFIQF).

It localises to the membrane. This is an uncharacterized protein from Dictyostelium discoideum (Social amoeba).